The primary structure comprises 600 residues: Aspartate--tRNA(Asp/Asn) ligase (600 aa).

Glutamate 174 is an L-aspartate binding site. Residues 198–201 (QLFK) form an aspartate region. An L-aspartate-binding site is contributed by arginine 220. ATP is bound by residues 220–222 (RDE) and glutamine 229. Residue histidine 457 participates in L-aspartate binding. Glutamate 491 is an ATP binding site. L-aspartate is bound at residue arginine 498. Residue 543–546 (GLDR) coordinates ATP.

This sequence belongs to the class-II aminoacyl-tRNA synthetase family. Type 1 subfamily. In terms of assembly, homodimer.

Its subcellular location is the cytoplasm. It catalyses the reaction tRNA(Asx) + L-aspartate + ATP = L-aspartyl-tRNA(Asx) + AMP + diphosphate. Aspartyl-tRNA synthetase with relaxed tRNA specificity since it is able to aspartylate not only its cognate tRNA(Asp) but also tRNA(Asn). Reaction proceeds in two steps: L-aspartate is first activated by ATP to form Asp-AMP and then transferred to the acceptor end of tRNA(Asp/Asn). In Burkholderia ambifaria (strain ATCC BAA-244 / DSM 16087 / CCUG 44356 / LMG 19182 / AMMD) (Burkholderia cepacia (strain AMMD)), this protein is Aspartate--tRNA(Asp/Asn) ligase.